Reading from the N-terminus, the 516-residue chain is Extracellular endo-inulinase inu2 (516 aa).

The first 23 residues, 1–23 (MLNPKVAYMVWMTCLGLTLPSQA), serve as a signal peptide directing secretion. Residues 41–43 (MNE) and Asn-61 contribute to the substrate site. The active site involves Glu-43. N-linked (GlcNAc...) asparagine glycosylation is found at Asn-108 and Asn-109. Residue Asp-176 coordinates substrate. Asn-210 carries N-linked (GlcNAc...) asparagine glycosylation. Asn-320 serves as a coordination point for substrate. A glycan (N-linked (GlcNAc...) asparagine) is linked at Asn-372.

The protein belongs to the glycosyl hydrolase 32 family.

It is found in the secreted. It carries out the reaction Endohydrolysis of (2-&gt;1)-beta-D-fructosidic linkages in inulin.. In terms of biological role, endo-inulinase involved in utilization of the plant storage polymer inulin, consisting of fructooligosaccharides with a degree of polymerization (DP) value from 2 to 60. This chain is Extracellular endo-inulinase inu2 (inu2), found in Aspergillus ficuum.